The following is a 449-amino-acid chain: Phosphoglucosamine mutase (449 aa).

S100 (phosphoserine intermediate) is an active-site residue. Mg(2+) is bound by residues S100, D241, D243, and D245. S100 carries the post-translational modification Phosphoserine.

Belongs to the phosphohexose mutase family. Mg(2+) is required as a cofactor. In terms of processing, activated by phosphorylation.

The catalysed reaction is alpha-D-glucosamine 1-phosphate = D-glucosamine 6-phosphate. Its function is as follows. Catalyzes the conversion of glucosamine-6-phosphate to glucosamine-1-phosphate. The protein is Phosphoglucosamine mutase of Caldicellulosiruptor saccharolyticus (strain ATCC 43494 / DSM 8903 / Tp8T 6331).